The following is a 126-amino-acid chain: Protein Wnt-1 (126 aa).

S1 carries the O-palmitoleoyl serine; by PORCN lipid modification. C92 and C107 are joined by a disulfide. 2 N-linked (GlcNAc...) asparagine glycosylation sites follow: N93 and N123.

The protein belongs to the Wnt family. In terms of processing, palmitoleoylation is required for efficient binding to frizzled receptors. Palmitoleoylation is necessary for proper trafficking to cell surface. Depalmitoleoylated by NOTUM, leading to inhibit Wnt signaling pathway.

The protein resides in the secreted. Its subcellular location is the extracellular space. It localises to the extracellular matrix. In terms of biological role, ligand for members of the frizzled family of seven transmembrane receptors. Acts in the canonical Wnt signaling pathway by promoting beta-catenin-dependent transcriptional activation. Plays an essential role in the development of the embryonic brain and central nervous system (CNS). Has a role in osteoblast function, bone development and bone homeostasis. This Pituophis melanoleucus (Pine snake) protein is Protein Wnt-1 (WNT-1).